The chain runs to 616 residues: General alpha-glucoside permease (616 aa).

At 1 to 115 the chain is on the cytoplasmic side; that stretch reads MKNIISLVSK…AALWSILVST (115 aa). Basic and acidic residues predominate over residues 15-27; sequence SKNEDKNISESSR. A disordered region spans residues 15–40; that stretch reads SKNEDKNISESSRDIVNQQEVFNTED. A helical membrane pass occupies residues 116–136; the sequence is TLVMEGYDTALLSALYALPVF. Topologically, residues 137–160 are extracellular; the sequence is QRKFGTLNGEGSYEITSQWQIGLN. Residues 161 to 181 traverse the membrane as a helical segment; that stretch reads MCVLCGEMIGLQITTYMVEFM. The Cytoplasmic portion of the chain corresponds to 182–191; sequence GNRYTMITAL. The chain crosses the membrane as a helical span at residues 192–212; it reads GLLTAYIFILYYCKSLAMIAV. Topologically, residues 213–214 are extracellular; that stretch reads GQ. A helical transmembrane segment spans residues 215–235; that stretch reads ILSAIPWGCFQSLAVTYASEV. The Cytoplasmic segment spans residues 236-242; that stretch reads CPLALRY. The chain crosses the membrane as a helical span at residues 243-263; the sequence is YMTSYSNICWLFGQIFASGIM. Residues 264-278 lie on the Extracellular side of the membrane; the sequence is KNSQENLGNSDLGYK. The helical transmembrane segment at 279 to 299 threads the bilayer; it reads LPFALQWIWPAPLMIGIFFAP. The Cytoplasmic segment spans residues 300–373; that stretch reads ESPWWLVRKD…VNGRRTRLAC (74 aa). Residues 374-394 form a helical membrane-spanning segment; the sequence is LTWVAQNSSGAVLLGYSTYFF. Residues 395–404 are Extracellular-facing; that stretch reads ERAGMATDKA. Residues 405–425 traverse the membrane as a helical segment; sequence FTFSLIQYCLGLAGTLCSWVI. Residues 426-433 lie on the Cytoplasmic side of the membrane; it reads SGRVGRWT. A helical membrane pass occupies residues 434–454; it reads ILTYGLAFQMVCLFIIGGMGF. Over 455-466 the chain is Extracellular; it reads GSGSSASNGAGG. A helical transmembrane segment spans residues 467–487; that stretch reads LLLALSFFYNAGIGAVVYCIV. Topologically, residues 488-504 are cytoplasmic; that stretch reads AEIPSAELRTKTIVLAR. A helical membrane pass occupies residues 505–525; sequence ICYNLMAVINAILTPYMLNVS. Residues 526-532 are Extracellular-facing; the sequence is DWNWGAK. Residues 533–553 form a helical membrane-spanning segment; the sequence is TGLYWGGFTAVTLAWVIIDLP. At 554–616 the chain is on the cytoplasmic side; it reads ETTGRTFSEI…QRELNAADKC (63 aa). The tract at residues 587-616 is disordered; it reads GKTQHDSLADESISQSSSIKQRELNAADKC. A compositionally biased stretch (basic and acidic residues) spans 606–616; it reads KQRELNAADKC.

The protein belongs to the major facilitator superfamily. Sugar transporter (TC 2.A.1.1) family.

The protein resides in the cell membrane. In terms of biological role, high-affinity uptake of alpha-glucosides such as maltose, turanose, isomaltose, alpha-methylglucoside, maltotriose, palatinose, trehalose, melezitose and glucose. Acts with the concomitant transport of protons into the cell (symport system). Provides an alternative and minor mechanism for growth on trehalose carbon source by transporting trehalose into the cytoplasm for conversion to glucose by neutral trehalase NTH1. The sequence is that of General alpha-glucoside permease from Saccharomyces cerevisiae (strain CEN.PK113-7D) (Baker's yeast).